A 467-amino-acid polypeptide reads, in one-letter code: ATP synthase subunit beta (467 aa).

154–161 (GGAGVGKT) serves as a coordination point for ATP.

This sequence belongs to the ATPase alpha/beta chains family. F-type ATPases have 2 components, CF(1) - the catalytic core - and CF(0) - the membrane proton channel. CF(1) has five subunits: alpha(3), beta(3), gamma(1), delta(1), epsilon(1). CF(0) has three main subunits: a(1), b(2) and c(9-12). The alpha and beta chains form an alternating ring which encloses part of the gamma chain. CF(1) is attached to CF(0) by a central stalk formed by the gamma and epsilon chains, while a peripheral stalk is formed by the delta and b chains.

It localises to the cell inner membrane. It carries out the reaction ATP + H2O + 4 H(+)(in) = ADP + phosphate + 5 H(+)(out). Functionally, produces ATP from ADP in the presence of a proton gradient across the membrane. The catalytic sites are hosted primarily by the beta subunits. The protein is ATP synthase subunit beta of Leptospira borgpetersenii serovar Hardjo-bovis (strain JB197).